Here is a 1383-residue protein sequence, read N- to C-terminus: Insulin receptor (1383 aa).

Residues 1–26 (MGSGRGCETTAVPLLMAVAVAGGTAG) form the signal peptide. 2 consecutive stretches face the extracellular side: residues 27–759 (HLYP…TRPS) and 764–957 (SLEE…NIAK). The cysteines at positions 34 and 52 are disulfide-linked. Asn42, Asn51, Asn104, and Asn137 each carry an N-linked (GlcNAc...) asparagine glycan. 9 cysteine pairs are disulfide-bonded: Cys152-Cys181, Cys185-Cys208, Cys195-Cys214, Cys218-Cys227, Cys222-Cys233, Cys234-Cys242, Cys238-Cys251, Cys254-Cys263, and Cys267-Cys279. The N-linked (GlcNAc...) asparagine glycan is linked to Asn241. N-linked (GlcNAc...) asparagine glycosylation occurs at Asn281. Cystine bridges form between Cys285/Cys310, Cys292/Cys300, Cys314/Cys327, Cys330/Cys334, and Cys338/Cys359. A glycan (N-linked (GlcNAc...) asparagine) is linked at Asn321. Asn363 carries an N-linked (GlcNAc...) asparagine glycan. Position 399 is a phosphoserine (Ser399). Tyr400 is modified (phosphotyrosine). Position 406 is a phosphoserine (Ser406). N-linked (GlcNAc...) asparagine glycosylation is found at Asn423 and Asn444. A disulfide bond links Cys461 and Cys494. N-linked (GlcNAc...) asparagine glycosylation is found at Asn540, Asn634, Asn652, and Asn699. Residues 625–727 (VPLDPISVSN…SQILKELEES (103 aa)) enclose the Fibronectin type-III 1 domain. The cysteines at positions 675 and 900 are disulfide-linked. A disordered region spans residues 687 to 709 (SPPFESDDSQKHNQSEYDDSASE). Residues 734–742 (EDYLHNVVF) are insulin-binding. The segment at 747 to 783 (TSSGNGAEDTRPSRKRRSLEEVGNVTATTPTLPDFPN) is disordered. 2 consecutive Fibronectin type-III domains span residues 754–848 (EDTR…TMPE) and 854–948 (IVGP…VTDY). N-linked (GlcNAc...) asparagine glycosylation is found at Asn770, Asn783, Asn921, and Asn934. A compositionally biased stretch (polar residues) spans 771–783 (VTATTPTLPDFPN). Residues 958-978 (IIIGPLIFVFLFSVVIGSIYL) form a helical membrane-spanning segment. Residues 979–1383 (FLRKRQPDGP…VLTLPRSNPS (405 aa)) are Cytoplasmic-facing. Residues 997–1000 (NPEY) form an important for interaction with IRS1, SHC1 and STAT5B region. Phosphotyrosine; by autocatalysis is present on Tyr1000. The 276-residue stretch at 1024–1299 (ITLLRELGQG…LLKDDLHPSF (276 aa)) folds into the Protein kinase domain. Residues Ser1034 and Lys1058 each coordinate ATP. A Glycyl lysine isopeptide (Lys-Gly) (interchain with G-Cter in ubiquitin) cross-link involves residue Lys1080. Cys1084 carries the S-nitrosocysteine modification. 1105 to 1111 (ELMAHGD) is an ATP binding site. Asp1160 (proton donor/acceptor) is an active-site residue. ATP-binding positions include 1164–1165 (RN) and Asp1178. Phosphotyrosine; by autocatalysis occurs at positions 1186, 1190, 1191, 1356, and 1362. The segment at 1361–1383 (PYTHMNGGKKNGRVLTLPRSNPS) is disordered. The interval 1362–1365 (YTHM) is PIK3R1 binding.

This sequence belongs to the protein kinase superfamily. Tyr protein kinase family. Insulin receptor subfamily. In terms of assembly, tetramer of 2 alpha and 2 beta chains linked by disulfide bonds. The alpha chains carry the insulin-binding regions, while the beta chains carry the kinase domain. Forms a hybrid receptor with IGF1R, the hybrid is a tetramer consisting of 1 alpha chain and 1 beta chain of INSR and 1 alpha chain and 1 beta chain of IGF1R. Interacts with SORBS1 but dissociates from it following insulin stimulation. Binds SH2B2. Activated form of INSR interacts (via Tyr-1000) with the PTB/PID domains of IRS1 and SHC1. The sequences surrounding the phosphorylated NPXY motif contribute differentially to either IRS1 or SHC1 recognition. Interacts (via tyrosines in the C-terminus) with IRS2 (via PTB domain and 591-786 AA); the 591-786 would be the primary anchor of IRS2 to INSR while the PTB domain would have a stabilizing action on the interaction with INSR. Interacts with the SH2 domains of the 85 kDa regulatory subunit of PI3K (PIK3R1) in vitro, when autophosphorylated on tyrosine residues. Interacts with SOCS7. Interacts (via the phosphorylated Tyr-1000), with SOCS3. Interacts (via the phosphorylated Tyr-1186, Tyr-1190, Tyr-1191) with SOCS1. Interacts with ARRB2. Interacts with GRB10; this interaction blocks the association between IRS1/IRS2 and INSR, significantly reduces insulin-stimulated tyrosine phosphorylation of IRS1 and IRS2 and thus decreases insulin signaling. Interacts with PDPK1. Interacts (via Tyr-1191) with GRB14 (via BPS domain); this interaction protects the tyrosines in the activation loop from dephosphorylation, but promotes dephosphorylation of Tyr-1000, this results in decreased interaction with, and phosphorylation of, IRS1. Interacts (via subunit alpha) with ENPP1 (via 485-599 AA); this interaction blocks autophosphorylation. Interacts with PTPRE; this interaction is dependent of Tyr-1186, Tyr-1190 and Tyr-1191 of the INSR. Interacts with STAT5B (via SH2 domain). Interacts with PTPRF. Interacts with GRB7. Interacts with CAV2 (tyrosine-phosphorylated form); the interaction is increased with 'Tyr-27'phosphorylation of CAV2. Interacts with ATIC; ATIC together with PRKAA2/AMPK2 and HACD3/PTPLAD1 is proposed to be part of a signaling netwok regulating INSR autophosphorylation and endocytosis. Interacts with the insulin receptor SORL1; this interaction strongly increases its surface exposure, hence strengthens insulin signal reception. Interacts (tyrosine phosphorylated) with CCDC88A/GIV (via SH2-like region); binding requires autophosphorylation of the Insr C-terminal region. Interacts with GNAI3; the interaction is probably mediated by CCDC88A/GIV. Interacts with LMBRD1. Interacts (in response to insulin stimulation) with NCK1; this interaction may recruit PTPN1 to mediate INSR dephosphorylation. Interacts with CD248; this interaction diminishes INSR autophosphorylation. In terms of processing, after being transported from the endoplasmic reticulum to the Golgi apparatus, the single glycosylated precursor is further glycosylated and then cleaved, followed by its transport to the plasma membrane. Post-translationally, autophosphorylated on tyrosine residues in response to insulin. Phosphorylation of Tyr-1000 is required for binding to IRS1, SHC1 and STAT5B. May also be phosphorylated at Tyr-1186 and Tyr-1191 by mTORC2. Dephosphorylated by PTPRE at Tyr-1000, Tyr-1186, Tyr-1190 and Tyr-1191. Dephosphorylated by PTPRF and PTPN1. Dephosphorylated by PTPN2; down-regulates insulin-induced signaling. S-nitrosylation at Cys-1084 by BLVRB inhibits the receptor tyrosine kinase, thereby inhibiting insulin signaling. In terms of processing, ubiquitinated by MARCHF1; leading to degradation thereby reducing surface INSR expression.

The protein localises to the cell membrane. Its subcellular location is the late endosome. The protein resides in the lysosome. It catalyses the reaction L-tyrosyl-[protein] + ATP = O-phospho-L-tyrosyl-[protein] + ADP + H(+). Its activity is regulated as follows. Activated in response to insulin. Autophosphorylation activates the kinase activity. PTPN1, PTPRE and PTPRF dephosphorylate important tyrosine residues, thereby reducing INSR activity. Inhibited by ENPP1. GRB10 and GRB14 inhibit the catalytic activity of the INSR, they block access of substrates to the activated receptor. SOCS1 and SOCS3 act as negative regulators of INSR activity, they bind to the activated INRS and interfere with the phosphorylation of INSR substrates. Functionally, receptor tyrosine kinase which mediates the pleiotropic actions of insulin. Binding of insulin leads to phosphorylation of several intracellular substrates, including, insulin receptor substrates (IRS1, 2, 3, 4), SHC, GAB1, CBL and other signaling intermediates. Each of these phosphorylated proteins serve as docking proteins for other signaling proteins that contain Src-homology-2 domains (SH2 domain) that specifically recognize different phosphotyrosine residues, including the p85 regulatory subunit of PI3K and SHP2. Phosphorylation of IRSs proteins lead to the activation of two main signaling pathways: the PI3K-AKT/PKB pathway, which is responsible for most of the metabolic actions of insulin, and the Ras-MAPK pathway, which regulates expression of some genes and cooperates with the PI3K pathway to control cell growth and differentiation. Binding of the SH2 domains of PI3K to phosphotyrosines on IRS1 leads to the activation of PI3K and the generation of phosphatidylinositol-(3, 4, 5)-triphosphate (PIP3), a lipid second messenger, which activates several PIP3-dependent serine/threonine kinases, such as PDPK1 and subsequently AKT/PKB. The net effect of this pathway is to produce a translocation of the glucose transporter SLC2A4/GLUT4 from cytoplasmic vesicles to the cell membrane to facilitate glucose transport. Moreover, upon insulin stimulation, activated AKT/PKB is responsible for: anti-apoptotic effect of insulin by inducing phosphorylation of BAD; regulates the expression of gluconeogenic and lipogenic enzymes by controlling the activity of the winged helix or forkhead (FOX) class of transcription factors. Another pathway regulated by PI3K-AKT/PKB activation is mTORC1 signaling pathway which regulates cell growth and metabolism and integrates signals from insulin. AKT mediates insulin-stimulated protein synthesis by phosphorylating TSC2 thereby activating mTORC1 pathway. The Ras/RAF/MAP2K/MAPK pathway is mainly involved in mediating cell growth, survival and cellular differentiation of insulin. Phosphorylated IRS1 recruits GRB2/SOS complex, which triggers the activation of the Ras/RAF/MAP2K/MAPK pathway. In addition to binding insulin, the insulin receptor can bind insulin-like growth factors (IGFI and IGFII). When present in a hybrid receptor with IGF1R, binds IGF1. In adipocytes, inhibits lipolysis. This chain is Insulin receptor (Insr), found in Rattus norvegicus (Rat).